The following is a 210-amino-acid chain: MGVRAQQKEKTRRSLVEAAFSQLSAERSFASLSLREVAREAGIAPTSFYRHFRDVDELGLTMVDESGLMLRQLMRQARQRIAKGGSVIRTSVSTFMEFIGNNPNAFRLLLRERSGTSAAFRAAVAREIQHFIAELADYLELENHMPRAFTEAQAEAMVTIVFSAGAEALDVGPEQRRQLEERLVLQLRMISKGAYYWYRREQEKMSHHSE.

Residues 10 to 70 enclose the HTH tetR-type domain; sequence KTRRSLVEAA…TMVDESGLML (61 aa). A DNA-binding region (H-T-H motif) is located at residues 33–52; that stretch reads SLREVAREAGIAPTSFYRHF.

As to quaternary structure, homodimer.

The protein resides in the cytoplasm. Its function is as follows. Represses the transcription of fabB, involved in unsaturated fatty acid (UFA) biosynthesis. By controlling UFA production, FabR directly influences the physical properties of the membrane bilayer. This Klebsiella pneumoniae subsp. pneumoniae (strain ATCC 700721 / MGH 78578) protein is HTH-type transcriptional repressor FabR.